We begin with the raw amino-acid sequence, 209 residues long: Ribosomal RNA small subunit methyltransferase G (209 aa).

Residues glycine 75, leucine 80, 126-127 (VE), and arginine 141 each bind S-adenosyl-L-methionine.

Belongs to the methyltransferase superfamily. RNA methyltransferase RsmG family.

The protein resides in the cytoplasm. The catalysed reaction is guanosine(527) in 16S rRNA + S-adenosyl-L-methionine = N(7)-methylguanosine(527) in 16S rRNA + S-adenosyl-L-homocysteine. In terms of biological role, specifically methylates the N7 position of guanine in position 527 of 16S rRNA. In Colwellia psychrerythraea (strain 34H / ATCC BAA-681) (Vibrio psychroerythus), this protein is Ribosomal RNA small subunit methyltransferase G.